Consider the following 658-residue polypeptide: Glycogen debranching enzyme (658 aa).

Residue Asp-336 is the Nucleophile of the active site. Glu-371 serves as the catalytic Proton donor. The tract at residues 459 to 484 is disordered; it reads EANGEENRDGTNSNYSDNHGKEGLGG.

The protein belongs to the glycosyl hydrolase 13 family.

The enzyme catalyses Hydrolysis of (1-&gt;6)-alpha-D-glucosidic linkages to branches with degrees of polymerization of three or four glucose residues in limit dextrin.. It functions in the pathway glycan degradation; glycogen degradation. Its function is as follows. Removes maltotriose and maltotetraose chains that are attached by 1,6-alpha-linkage to the limit dextrin main chain, generating a debranched limit dextrin. This chain is Glycogen debranching enzyme, found in Salmonella enteritidis PT4 (strain P125109).